The primary structure comprises 472 residues: Argininosuccinate lyase (472 aa).

This sequence belongs to the lyase 1 family. Argininosuccinate lyase subfamily.

It is found in the cytoplasm. The catalysed reaction is 2-(N(omega)-L-arginino)succinate = fumarate + L-arginine. The protein operates within amino-acid biosynthesis; L-arginine biosynthesis; L-arginine from L-ornithine and carbamoyl phosphate: step 3/3. The chain is Argininosuccinate lyase from Maricaulis maris (strain MCS10) (Caulobacter maris).